A 402-amino-acid chain; its full sequence is Imidazolonepropionase (402 aa).

Histidine 66 and histidine 68 together coordinate Fe(3+). Positions 66 and 68 each coordinate Zn(2+). Positions 75, 138, and 171 each coordinate 4-imidazolone-5-propanoate. Position 138 (tyrosine 138) interacts with N-formimidoyl-L-glutamate. Histidine 236 lines the Fe(3+) pocket. Zn(2+) is bound at residue histidine 236. Glutamine 239 lines the 4-imidazolone-5-propanoate pocket. Aspartate 311 lines the Fe(3+) pocket. Aspartate 311 is a Zn(2+) binding site. Residues asparagine 313 and glycine 315 each coordinate N-formimidoyl-L-glutamate. Threonine 316 contributes to the 4-imidazolone-5-propanoate binding site.

The protein belongs to the metallo-dependent hydrolases superfamily. HutI family. Zn(2+) is required as a cofactor. It depends on Fe(3+) as a cofactor.

It localises to the cytoplasm. It carries out the reaction 4-imidazolone-5-propanoate + H2O = N-formimidoyl-L-glutamate. Its pathway is amino-acid degradation; L-histidine degradation into L-glutamate; N-formimidoyl-L-glutamate from L-histidine: step 3/3. In terms of biological role, catalyzes the hydrolytic cleavage of the carbon-nitrogen bond in imidazolone-5-propanoate to yield N-formimidoyl-L-glutamate. It is the third step in the universal histidine degradation pathway. The sequence is that of Imidazolonepropionase from Vibrio cholerae serotype O1 (strain ATCC 39541 / Classical Ogawa 395 / O395).